The chain runs to 356 residues: Phosphoribosylformylglycinamidine cyclo-ligase (356 aa).

It belongs to the AIR synthase family.

The protein resides in the cytoplasm. It carries out the reaction 2-formamido-N(1)-(5-O-phospho-beta-D-ribosyl)acetamidine + ATP = 5-amino-1-(5-phospho-beta-D-ribosyl)imidazole + ADP + phosphate + H(+). It participates in purine metabolism; IMP biosynthesis via de novo pathway; 5-amino-1-(5-phospho-D-ribosyl)imidazole from N(2)-formyl-N(1)-(5-phospho-D-ribosyl)glycinamide: step 2/2. This chain is Phosphoribosylformylglycinamidine cyclo-ligase, found in Acinetobacter baumannii (strain AB307-0294).